Consider the following 198-residue polypeptide: Synaptobrevin homolog YKT6-B (198 aa).

The Longin domain maps to 8 to 127 (VLYKGENKVH…IQYNALDSYL (120 aa)). Positions 138–198 (PMSKVQAELD…RKQNSCCDIM (61 aa)) constitute a v-SNARE coiled-coil homology domain. A lipid anchor (S-palmitoyl cysteine) is attached at C194. Position 195 is a cysteine methyl ester (C195). C195 carries S-farnesyl cysteine lipidation. The propeptide at 196–198 (DIM) is removed in mature form.

Belongs to the synaptobrevin family. In terms of processing, palmitoylated; catalyzes its own palmitoylation. Palmitoylation is required for Golgi targeting. Post-translationally, farnesylation is required for Golgi targeting.

It is found in the cytoplasm. The protein localises to the cytosol. Its subcellular location is the cytoplasmic vesicle membrane. It localises to the golgi apparatus membrane. Vesicular soluble NSF attachment protein receptor (v-SNARE) mediating vesicle docking and fusion to a specific acceptor cellular compartment. Functions in endoplasmic reticulum to Golgi transport; as part of a SNARE complex composed of GOSR1, GOSR2 and STX5. Functions in early/recycling endosome to TGN transport; as part of a SNARE complex composed of BET1L, GOSR1 and STX5. Has a S-palmitoyl transferase activity. The polypeptide is Synaptobrevin homolog YKT6-B (ykt6-b) (Xenopus laevis (African clawed frog)).